The sequence spans 417 residues: Methyltransferase/ribosomally synthesized cyclic peptide omphalotin A precursor ophMA (417 aa).

The segment at 1–251 (METSTQTKAG…GVSTFYIPPK (251 aa)) is methyltransferase domain. Residues Arg-72, Tyr-76, and Tyr-98 contribute to the active site. Positions 98, 100, 103, 130, 172, 213, 244, and 245 each coordinate S-adenosyl-L-methionine. The segment at 252-378 (ARKASNLDII…WAIRCAMKNM (127 aa)) is clasp domain. Residues 379-399 (PSSLLDAARESGEEASQNGFP) are precursor leader. Val-401, Val-403, and Val-404 each carry N-methylvaline. Residue Gly-405 is modified to N-methylglycine. Val-406 carries the post-translational modification N-methylvaline. Ile-407 bears the N-methylisoleucine mark. At Gly-408 the chain carries N-methylglycine. N-methylisoleucine is present on Ile-410. Gly-411 is modified (N-methylglycine). Val-413 bears the N-methylvaline mark.

This sequence in the N-terminal section; belongs to the precorrin methyltransferase family. Homodimer. OphMA automethylates at Val-401, Val-403, Val-404, Gly-405, Val-406, Ile-407, Gly-408, Ile-410, Gly-411 and Val-413 before being processed by the prolyloligopeptidase ophP which likely forms a peptidyl ester upon removal of the follower propeptide, which then undergoes macrocyclization with the N-terminus of the modified core peptide. Peptide backbone alpha-N-methylations change the physicochemical properties of amide bonds to provide structural constraints and other favorable characteristics including biological membrane permeability to peptides.

Its pathway is mycotoxin biosynthesis. Its function is as follows. Fusion protein of the methyltransferase ophM and the omphalotin core peptide; part of the gene cluster that mediates the biosynthesis of omphalotin A, a highly methylated cyclic dodecapeptide with nematodicidal activity. Omphalotin A derives from the C-terminus of the ophMA protein, and it is the ophMA protein that methylates its own C-terminus using S-adenosyl methionine (SAM). The C-terminus is subsequently cleaved off and macrocyclized by the prolyloligopeptidase ophP to give the final product. The protein is Methyltransferase/ribosomally synthesized cyclic peptide omphalotin A precursor ophMA of Omphalotus olearius (Jack o'lantern).